We begin with the raw amino-acid sequence, 666 residues long: Protein OS-9 (666 aa).

An N-terminal signal peptide occupies residues 1–30; that stretch reads MAAEALLSSLLGLLFLGLLLPAHLTGGVGS. The MRH domain occupies 108 to 230; sequence APCLLKTKDW…SIRTSRLCPH (123 aa). Cysteines 110 and 123 form a disulfide. A mannooligosaccharide derivative is bound by residues Trp-117, Trp-118, and Gln-130. The N-linked (GlcNAc...) asparagine glycan is linked to Asn-177. 2 disulfide bridges follow: Cys-181–Cys-216 and Cys-196–Cys-228. Positions 182, 188, 212, and 218 each coordinate a mannooligosaccharide derivative. Disordered regions lie at residues 261–356, 370–449, 505–540, and 631–666; these read RQAE…NVQV, EELK…SDRE, ESQS…EHRV, and EANK…EFDF. 2 stretches are compositionally biased toward basic and acidic residues: residues 263–281 and 294–310; these read AESK…DTDH and PKKE…ESEF. Positions 320–332 are enriched in low complexity; the sequence is QATGTEEAQAGEQ. Composition is skewed to basic and acidic residues over residues 370 to 379 and 395 to 412; these read EELKGAEKGK and PQRE…RGLV. A compositionally biased stretch (acidic residues) spans 413-429; the sequence is EEEDGDEEEEDEDEDEQ. Positions 434-449 are enriched in basic and acidic residues; that stretch reads EFEKELEGMLLPSDRE. The segment covering 631–646 has biased composition (basic and acidic residues); that stretch reads EANKERQRQSELESNY. Positions 657–666 are enriched in acidic residues; it reads DTGDLDEFDF.

This sequence belongs to the OS-9 family. Component of the HRD1 complex, which comprises at least SYNV1/HRD1, DERL1/2, FAM8A1, HERPUD1/HERP, OS9, SEL1L and UBE2J1. FAM8A1 is stabilized by interaction with SYNV1, which prevents its proteasomal degradation. OS9 and UBE2J1 recruitment to the complex may be mediated by SEL1L. Through this complex, may interact with ERLEC1 and HSPA5. Interacts (via C-terminus) with CPNE6 (via second C2 domain); this interaction occurs in a calcium-dependent manner in vitro. Interacts with CREB3. Post-translationally, intramolecular disulfide bonds.

The protein localises to the endoplasmic reticulum lumen. Lectin component of the HRD1 complex, which functions in endoplasmic reticulum (ER) quality control and ER-associated degradation (ERAD). Specifically recognizes and binds improperly folded glycoproteins as well as hyperglycosylated proteins, retain them in the ER, and transfers them to the ubiquitination machinery and promote their degradation. Possible targets include TRPV4 as well as hyperglycosylated HSP90B1. This is Protein OS-9 (Os9) from Rattus norvegicus (Rat).